Reading from the N-terminus, the 490-residue chain is GTPase Der (490 aa).

EngA-type G domains lie at 3-166 (PVVA…MDDV) and 203-376 (IKLA…DSST). GTP-binding positions include 9-16 (GRPNVGKS), 56-60 (DTGGI), 118-121 (NKTD), 209-216 (GRPNVGKS), 256-260 (DTAGV), and 321-324 (NKWD). The 85-residue stretch at 377 to 461 (RRVSTAMLTR…PIRIQFKEGE (85 aa)) folds into the KH-like domain.

It belongs to the TRAFAC class TrmE-Era-EngA-EngB-Septin-like GTPase superfamily. EngA (Der) GTPase family. In terms of assembly, associates with the 50S ribosomal subunit.

Its function is as follows. GTPase that plays an essential role in the late steps of ribosome biogenesis. The sequence is that of GTPase Der from Salmonella gallinarum (strain 287/91 / NCTC 13346).